The primary structure comprises 138 residues: uncharacterized protein (138 aa).

Residues 19 to 40 traverse the membrane as a helical segment; it reads ECKVSVISFFLLAFLLMAHIWL. Tandem repeats lie at residues 94-106, 107-119, and 120-132. The 3 X 13 AA tandem repeats of K-G-E-I-E-G-K-E-E-K-K-E-[GV] stretch occupies residues 94-132; the sequence is KGEIEGKEEKKEGKGEIEGKEEKKEGKGEIEGKEEKKEV. Positions 98 to 138 are disordered; sequence EGKEEKKEGKGEIEGKEEKKEGKGEIEGKEEKKEVENGPRK.

As to expression, expressed in roots, leaves and flowers.

It is found in the mitochondrion membrane. Functionally, involved in cytoplasmic male sterility (CMS) by leading to pollen abortion. Not expressed in fertile (normal) plants. This is an uncharacterized protein from Raphanus sativus (Radish).